The following is a 404-amino-acid chain: UPF0261 protein CTC_01794 (404 aa).

This sequence belongs to the UPF0261 family.

The protein is UPF0261 protein CTC_01794 of Clostridium tetani (strain Massachusetts / E88).